The following is a 212-amino-acid chain: ATP-dependent dethiobiotin synthetase BioD (212 aa).

An ATP-binding site is contributed by 12 to 17 (DCGKTF). T16 lines the Mg(2+) pocket. K33 is an active-site residue. S37 serves as a coordination point for substrate. Residues D50, 110-113 (EGAG), and 170-171 (NC) contribute to the ATP site. 2 residues coordinate Mg(2+): D50 and E110.

It belongs to the dethiobiotin synthetase family. As to quaternary structure, homodimer. The cofactor is Mg(2+).

The protein resides in the cytoplasm. The enzyme catalyses (7R,8S)-7,8-diammoniononanoate + CO2 + ATP = (4R,5S)-dethiobiotin + ADP + phosphate + 3 H(+). It participates in cofactor biosynthesis; biotin biosynthesis; biotin from 7,8-diaminononanoate: step 1/2. Functionally, catalyzes a mechanistically unusual reaction, the ATP-dependent insertion of CO2 between the N7 and N8 nitrogen atoms of 7,8-diaminopelargonic acid (DAPA, also called 7,8-diammoniononanoate) to form a ureido ring. The chain is ATP-dependent dethiobiotin synthetase BioD from Legionella pneumophila (strain Corby).